Consider the following 220-residue polypeptide: Uracil-DNA glycosylase 1 (220 aa).

The Proton acceptor role is filled by D65.

Belongs to the uracil-DNA glycosylase (UDG) superfamily. UNG family.

The protein resides in the cytoplasm. The enzyme catalyses Hydrolyzes single-stranded DNA or mismatched double-stranded DNA and polynucleotides, releasing free uracil.. In terms of biological role, excises uracil residues from the DNA which can arise as a result of misincorporation of dUMP residues by DNA polymerase or due to deamination of cytosine. The chain is Uracil-DNA glycosylase 1 from Bacteroides fragilis (strain YCH46).